The sequence spans 427 residues: 3-phosphoshikimate 1-carboxyvinyltransferase (427 aa).

Lysine 23, serine 24, and arginine 28 together coordinate 3-phosphoshikimate. Phosphoenolpyruvate is bound at residue lysine 23. The phosphoenolpyruvate site is built by glycine 97 and arginine 125. Residues serine 169, serine 170, glutamine 171, serine 197, aspartate 313, asparagine 336, and lysine 340 each coordinate 3-phosphoshikimate. Phosphoenolpyruvate is bound at residue glutamine 171. The active-site Proton acceptor is aspartate 313. Residues arginine 344, arginine 386, and lysine 411 each contribute to the phosphoenolpyruvate site.

The protein belongs to the EPSP synthase family. Monomer.

Its subcellular location is the cytoplasm. The enzyme catalyses 3-phosphoshikimate + phosphoenolpyruvate = 5-O-(1-carboxyvinyl)-3-phosphoshikimate + phosphate. The protein operates within metabolic intermediate biosynthesis; chorismate biosynthesis; chorismate from D-erythrose 4-phosphate and phosphoenolpyruvate: step 6/7. In terms of biological role, catalyzes the transfer of the enolpyruvyl moiety of phosphoenolpyruvate (PEP) to the 5-hydroxyl of shikimate-3-phosphate (S3P) to produce enolpyruvyl shikimate-3-phosphate and inorganic phosphate. In Yersinia ruckeri, this protein is 3-phosphoshikimate 1-carboxyvinyltransferase.